We begin with the raw amino-acid sequence, 1059 residues long: Probable sucrose-phosphate synthase (1059 aa).

Disordered stretches follow at residues Ala-95–Arg-145, Arg-671–Leu-695, Asp-710–Asp-731, and Ser-748–Phe-769. A compositionally biased stretch (basic and acidic residues) spans Arg-102 to Thr-114. The span at Gly-681 to Pro-691 shows a compositional bias: acidic residues.

The protein belongs to the glycosyltransferase 1 family. In terms of assembly, homodimer or homotetramer.

It catalyses the reaction beta-D-fructose 6-phosphate + UDP-alpha-D-glucose = sucrose 6(F)-phosphate + UDP + H(+). Its pathway is glycan biosynthesis; sucrose biosynthesis; sucrose from D-fructose 6-phosphate and UDP-alpha-D-glucose: step 1/2. Activity is regulated by phosphorylation and moderated by concentration of metabolites and light. Plays a role in photosynthetic sucrose synthesis by catalyzing the rate-limiting step of sucrose biosynthesis from UDP-glucose and fructose- 6-phosphate. Involved in the regulation of carbon partitioning in the leaves of plants. May regulate the synthesis of sucrose and therefore play a major role as a limiting factor in the export of photoassimilates out of the leaf. Plays a role for sucrose availability that is essential for plant growth and fiber elongation. This is Probable sucrose-phosphate synthase (SPS) from Vicia faba (Broad bean).